A 334-amino-acid polypeptide reads, in one-letter code: Serpentine receptor class alpha-11 (334 aa).

Residues 1–23 (MTTNNPVCASDAHMEMYSSKLYT) lie on the Extracellular side of the membrane. A helical transmembrane segment spans residues 24-44 (SALFLNLIIATTSMILTGFAI). Residues 45–57 (QKLFMESIINIST) are Cytoplasmic-facing. The helical transmembrane segment at 58-80 (RMFLFCGLMCCSLHQTAYIVLRI) threads the bilayer. The Extracellular portion of the chain corresponds to 81 to 105 (QVIYQVFFKLSEPCNLYYPAIDCKY). Residues 106-126 (VTFSLVAGNTGMIFIQSAMTI) traverse the membrane as a helical segment. Over 127–145 (DRIFATIFPKLWPKLKYWP) the chain is Cytoplasmic. A helical transmembrane segment spans residues 146–166 (GVVLSILMIACNYANVQIIFW). Topologically, residues 167-191 (GDPLTEYVPTCGQFPSKSVNRFQTF) are extracellular. A helical membrane pass occupies residues 192–212 (LAIALYMSIAHMVINVIILYI). Over 213–239 (NVLQDRQQSKSFNVNQRYQSREALKSS) the chain is Cytoplasmic. A helical transmembrane segment spans residues 240–260 (QAIFFLSMSQFFACLIYSVFT). Over 261–277 (KVFLEFQLNLSPLQSGL) the chain is Extracellular. Residues 278-298 (VLALSYTTPYACIAIPSLIIF) traverse the membrane as a helical segment. The Cytoplasmic segment spans residues 299-334 (TFRFIKNQRLRNINELRSQTETGDECMRKIAKIWEK).

It belongs to the nematode receptor-like protein sra family. As to expression, expressed in interneurons AIY and AVB in L1 larvae. In adults, strong expression is seen in AIY and AIA but only weak expression in AVB.

Its subcellular location is the membrane. Functionally, a G protein-coupled receptor required for olfactory imprinting a requisite in ordorant response such as benzaldehyde and isoamylalcohol. This Caenorhabditis elegans protein is Serpentine receptor class alpha-11 (sra-11).